Consider the following 383-residue polypeptide: S-adenosylmethionine synthase (383 aa).

His-22 serves as a coordination point for ATP. Asp-24 serves as a coordination point for Mg(2+). Residue Glu-50 participates in K(+) binding. Glu-63 and Gln-99 together coordinate L-methionine. A flexible loop region spans residues 99–109; sequence QSSEINQAVQS. ATP contacts are provided by residues 160–162, Asp-235, 241–242, Ser-258, and Lys-262; these read DMK and RK. An L-methionine-binding site is contributed by Asp-235. Residue Lys-266 participates in L-methionine binding.

Belongs to the AdoMet synthase family. Homotetramer; dimer of dimers. Requires Mg(2+) as cofactor. K(+) is required as a cofactor.

The protein localises to the cytoplasm. It carries out the reaction L-methionine + ATP + H2O = S-adenosyl-L-methionine + phosphate + diphosphate. The protein operates within amino-acid biosynthesis; S-adenosyl-L-methionine biosynthesis; S-adenosyl-L-methionine from L-methionine: step 1/1. Its function is as follows. Catalyzes the formation of S-adenosylmethionine (AdoMet) from methionine and ATP. The overall synthetic reaction is composed of two sequential steps, AdoMet formation and the subsequent tripolyphosphate hydrolysis which occurs prior to release of AdoMet from the enzyme. This is S-adenosylmethionine synthase from Mycoplasma pneumoniae (strain ATCC 29342 / M129 / Subtype 1) (Mycoplasmoides pneumoniae).